The chain runs to 276 residues: Rhamnulose-1-phosphate aldolase (276 aa).

Glu-117 is an active-site residue. Zn(2+) contacts are provided by His-141, His-143, and His-212.

This sequence belongs to the aldolase class II family. RhaD subfamily. In terms of assembly, homotetramer. Zn(2+) is required as a cofactor.

The protein resides in the cytoplasm. The enzyme catalyses L-rhamnulose 1-phosphate = (S)-lactaldehyde + dihydroxyacetone phosphate. It participates in carbohydrate degradation; L-rhamnose degradation; glycerone phosphate from L-rhamnose: step 3/3. Its function is as follows. Catalyzes the reversible cleavage of L-rhamnulose-1-phosphate to dihydroxyacetone phosphate (DHAP) and L-lactaldehyde. This is Rhamnulose-1-phosphate aldolase from Klebsiella pneumoniae (strain 342).